A 976-amino-acid chain; its full sequence is Serine/threonine-protein kinase CLA4 (976 aa).

Positions 1–46 (MTSIYTSDLKNHRRAPPPPNGAAGSGSGSSSGSGSGSGSGSGSGSL) are disordered. Positions 23-43 (AGSGSGSSSGSGSGSGSGSGS) are enriched in gly residues. The PH domain maps to 73-184 (SKRQSGWVHV…WLDAFTTKCP (112 aa)). A disordered region spans residues 207-231 (LTNGSLNGNSSSSPTSGLSSSSVLT). One can recognise a CRIB domain in the interval 237–250 (VSGPINFTHKVHVG). 2 disordered regions span residues 298–522 (GGNS…KIHP) and 559–658 (SKKS…QLKK). 2 stretches are compositionally biased toward low complexity: residues 313–332 (NSKT…AKNN) and 371–411 (LNGS…PLNN). A compositionally biased stretch (polar residues) spans 430 to 440 (SGTSSDTYSNK). Positions 441 to 455 (NHQDRSGYEQQRQQR) are enriched in basic and acidic residues. Residues 456–487 (TDSSQQQQQQQKQHQYQQKSQQQQQQPLSSHQ) are compositionally biased toward low complexity. The span at 496 to 505 (QVPPTLPSSG) shows a compositional bias: pro residues. Low complexity predominate over residues 559–583 (SKKSQQQLASKQPSPPSSQQQQQKP). Residues 622 to 635 (NETSGVSKTPSPTD) show a composition bias toward polar residues. The region spanning 685–940 (FRIVEKAGQG…TDELLEHSFI (256 aa)) is the Protein kinase domain. ATP-binding positions include 691-699 (AGQGASGNV) and lysine 715. Residue aspartate 808 is the Proton acceptor of the active site.

Belongs to the protein kinase superfamily. STE Ser/Thr protein kinase family. STE20 subfamily. Interacts (via the CRIB domain) with CDC42.

It carries out the reaction L-seryl-[protein] + ATP = O-phospho-L-seryl-[protein] + ADP + H(+). The catalysed reaction is L-threonyl-[protein] + ATP = O-phospho-L-threonyl-[protein] + ADP + H(+). Ser/Thr kinase required for wild-type filamentous growth, chlamydospore formation, and virulence in mouse systemic infection. This Candida albicans (strain SC5314 / ATCC MYA-2876) (Yeast) protein is Serine/threonine-protein kinase CLA4 (CLA4).